The chain runs to 1669 residues: Collagen alpha-1(IV) chain (1669 aa).

An N-terminal signal peptide occupies residues 1 to 27; it reads MGPRLGVWLLLLLAALLLHEESSRAAA. A propeptide spans 28-172 (N-terminal propeptide (7S domain)); the sequence is KGGCAGSGCG…LGHIPGTLLK (145 aa). The tract at residues 50–1445 is disordered; sequence ERGLPGLQGV…PPGTPSVDHG (1396 aa). The tract at residues 173-1440 is triple-helical region; that stretch reads GERGYPGQPG…PGSMGPPGTP (1268 aa). Residues 196–214 are compositionally biased toward pro residues; sequence VGPPGFTGPPGPPGPPGPP. 3-hydroxyproline occurs at positions 204, 207, and 210. Composition is skewed to basic and acidic residues over residues 254–263 and 289–298; these read TAMRGEKGQK and PGKDGEKGEK. The segment covering 347–356 has biased composition (gly residues); that stretch reads GYPGGPGAKG. The span at 357–366 shows a compositional bias: low complexity; it reads ETGPKGFPGI. Residues 367–376 are compositionally biased toward pro residues; it reads PGQPGPPGFP. The span at 396–412 shows a compositional bias: low complexity; sequence PGLPGVSLPGPSGRDGL. Pro residues-rich tracts occupy residues 413 to 424 and 436 to 448; these read PGPPGPPGPPGQ and PGPPGDQGPPGIP. Residues 485–494 are compositionally biased toward low complexity; sequence PGEIGFPGQP. Basic and acidic residues-rich tracts occupy residues 497-508 and 535-545; these read KGDRGLPGRDGL and FDIRLKGDKGD. Residues 586–595 show a composition bias toward gly residues; the sequence is GPPGGVGFPG. 2 positions are modified to 3-hydroxyproline: Pro-587 and Pro-602. Pro-603 bears the 4-hydroxyproline mark. Pro-605 carries the 3-hydroxyproline modification. Pro-606, Pro-623, Pro-626, Pro-629, and Pro-632 each carry 4-hydroxyproline. Pro-647 carries the post-translational modification 3-hydroxyproline. 2 stretches are compositionally biased toward gly residues: residues 758-767 and 797-817; these read GNVGGPGIPG and GVPGIGPPGAMGPPGGQGPPG. Residues 847–871 show a composition bias toward low complexity; the sequence is SQGLPGLTGQSGLPGLPGQQGTPGQ. Over residues 937–955 the composition is skewed to basic and acidic residues; it reads SMDKVDMGSMKGEKGDQGE. Residues 1011 to 1020 are compositionally biased toward gly residues; it reads GSAGGMGLPG. Low complexity-rich tracts occupy residues 1030–1040, 1101–1114, and 1193–1212; these read IPGPQGIPGLP, SPGSVGYPGSPGLP, and FPGLSGSPGIPGSKGEQGFM. Position 1214 is a 3-hydroxyproline (Pro-1214). Over residues 1247–1258 the composition is skewed to pro residues; that stretch reads PGRPGPMGPPGL. The span at 1290-1299 shows a compositional bias: gly residues; it reads GMPGIGGSPG. The span at 1413–1428 shows a compositional bias: pro residues; sequence FGPPGPRGFPGPPGPD. Pro-1424 bears the 3-hydroxyproline mark. Positions 1445 to 1669 constitute a Collagen IV NC1 domain; sequence GFLVTRHSQT…SRCQVCMRRT (225 aa). Cystine bridges form between Cys-1460/Cys-1551, Cys-1493/Cys-1548, Cys-1505/Cys-1511, Cys-1570/Cys-1665, Cys-1604/Cys-1662, and Cys-1616/Cys-1622. Residue Met-1533 forms an S-Lysyl-methionine sulfilimine (Met-Lys) (interchain with K-1651) linkage. An S-Lysyl-methionine sulfilimine (Lys-Met) (interchain with M-1533) cross-link involves residue Lys-1651.

This sequence belongs to the type IV collagen family. There are six type IV collagen isoforms, alpha 1(IV)-alpha 6(IV), each of which can form a triple helix structure with 2 other chains to generate type IV collagen network. Interacts with EFEMP2. Lysines at the third position of the tripeptide repeating unit (G-X-Y) are hydroxylated in all cases. The modified lysines can be O-glycosylated. Post-translationally, contains 4-hydroxyproline. Prolines at the third position of the tripeptide repeating unit (G-X-Y) are hydroxylated in some or all of the chains. In terms of processing, contains 3-hydroxyproline. This modification occurs on the first proline residue in the sequence motif Gly-Pro-Hyp, where Hyp is 4-hydroxyproline. Type IV collagens contain numerous cysteine residues which are involved in inter- and intramolecular disulfide bonding. 12 of these, located in the NC1 domain, are conserved in all known type IV collagens. Post-translationally, the trimeric structure of the NC1 domains is stabilized by covalent bonds (sulfilimine cross-links) between Lys and Met residues. These cross-links are important for the mechanical stability of the basement membrane. Sulfilimine cross-link is catalyzed by PXDN. In terms of processing, proteolytic processing produces the C-terminal NC1 peptide, arresten.

It localises to the secreted. Its subcellular location is the extracellular space. The protein localises to the extracellular matrix. The protein resides in the basement membrane. Type IV collagen is the major structural component of glomerular basement membranes (GBM), forming a 'chicken-wire' meshwork together with laminins, proteoglycans and entactin/nidogen. Its function is as follows. Arresten, comprising the C-terminal NC1 domain, inhibits angiogenesis and tumor formation. The C-terminal half is found to possess the anti-angiogenic activity. Specifically inhibits endothelial cell proliferation, migration and tube formation. In Bos taurus (Bovine), this protein is Collagen alpha-1(IV) chain.